We begin with the raw amino-acid sequence, 157 residues long: MRIGHGYDVHRFCDGDFITLGGVRIPHKYGLLAHSDGDVLLHALSDALLGAAALGDIGKHFPDTDPQFKGADSRVLLRHVVGIVDNKGWKVGNVDATIVAQAPKMAPHIETMRQQIAADLQVELDQVNVKATTEEKLGFTGREEGIAVHAVALLLPA.

Aspartate 8 and histidine 10 together coordinate a divalent metal cation. 4-CDP-2-C-methyl-D-erythritol 2-phosphate-binding positions include 8-10 and 34-35; these read DVH and HS. Histidine 42 contributes to the a divalent metal cation binding site. 4-CDP-2-C-methyl-D-erythritol 2-phosphate contacts are provided by residues 56–58, 61–65, 100–106, 132–135, phenylalanine 139, and arginine 142; these read DIG, FPDTD, AQAPKMA, and TTEE.

Belongs to the IspF family. As to quaternary structure, homotrimer. A divalent metal cation is required as a cofactor.

The enzyme catalyses 4-CDP-2-C-methyl-D-erythritol 2-phosphate = 2-C-methyl-D-erythritol 2,4-cyclic diphosphate + CMP. It participates in isoprenoid biosynthesis; isopentenyl diphosphate biosynthesis via DXP pathway; isopentenyl diphosphate from 1-deoxy-D-xylulose 5-phosphate: step 4/6. Functionally, involved in the biosynthesis of isopentenyl diphosphate (IPP) and dimethylallyl diphosphate (DMAPP), two major building blocks of isoprenoid compounds. Catalyzes the conversion of 4-diphosphocytidyl-2-C-methyl-D-erythritol 2-phosphate (CDP-ME2P) to 2-C-methyl-D-erythritol 2,4-cyclodiphosphate (ME-CPP) with a corresponding release of cytidine 5-monophosphate (CMP). This chain is 2-C-methyl-D-erythritol 2,4-cyclodiphosphate synthase, found in Pseudomonas entomophila (strain L48).